We begin with the raw amino-acid sequence, 182 residues long: MLDAFSRAVVSADSKGATIGSAELSSLRKYVADANKRIDATLAITQNVSCIAADAISGMVCENTGLTQPGGHCYPTRRMAACLRDGEIILRYVSYALLAGDPSVLDDRCINGLKETYIALGVPLSNAIRAIEIMKIATVAIMTETNSGRKMFEGINSGSGAECKDIASEAASYFDRVIDALN.

Cys82 serves as a coordination point for (2R,3E)-phycoerythrobilin.

This sequence belongs to the phycobiliprotein family. Homodimer. In terms of processing, contains one covalently linked phycoerythrobilin chromophore.

Functionally, green-light absorbing phycoerythrin of unknown function. This is R-phycoerythrin subunit beta (cpeB) from Prochlorococcus marinus (strain SARG / CCMP1375 / SS120).